We begin with the raw amino-acid sequence, 82 residues long: ATP synthase subunit c (82 aa).

Helical transmembrane passes span 3–23 and 57–77; these read PLVASASVLAAALAIGLASLG and LAFMESLTIYGLVIALVLLFA.

The protein belongs to the ATPase C chain family. In terms of assembly, F-type ATPases have 2 components, F(1) - the catalytic core - and F(0) - the membrane proton channel. F(1) has five subunits: alpha(3), beta(3), gamma(1), delta(1), epsilon(1). F(0) has four main subunits: a(1), b(1), b'(1) and c(10-14). The alpha and beta chains form an alternating ring which encloses part of the gamma chain. F(1) is attached to F(0) by a central stalk formed by the gamma and epsilon chains, while a peripheral stalk is formed by the delta, b and b' chains.

The protein localises to the cellular thylakoid membrane. F(1)F(0) ATP synthase produces ATP from ADP in the presence of a proton or sodium gradient. F-type ATPases consist of two structural domains, F(1) containing the extramembraneous catalytic core and F(0) containing the membrane proton channel, linked together by a central stalk and a peripheral stalk. During catalysis, ATP synthesis in the catalytic domain of F(1) is coupled via a rotary mechanism of the central stalk subunits to proton translocation. Its function is as follows. Key component of the F(0) channel; it plays a direct role in translocation across the membrane. A homomeric c-ring of between 10-14 subunits forms the central stalk rotor element with the F(1) delta and epsilon subunits. The sequence is that of ATP synthase subunit c from Synechococcus sp. (strain PCC 6716).